We begin with the raw amino-acid sequence, 305 residues long: Glycine--tRNA ligase alpha subunit (305 aa).

Belongs to the class-II aminoacyl-tRNA synthetase family. In terms of assembly, tetramer of two alpha and two beta subunits.

It is found in the cytoplasm. It carries out the reaction tRNA(Gly) + glycine + ATP = glycyl-tRNA(Gly) + AMP + diphosphate. The protein is Glycine--tRNA ligase alpha subunit of Streptococcus uberis (strain ATCC BAA-854 / 0140J).